The primary structure comprises 500 residues: Probable malate:quinone oxidoreductase (500 aa).

This sequence belongs to the MQO family. It depends on FAD as a cofactor.

It carries out the reaction (S)-malate + a quinone = a quinol + oxaloacetate. Its pathway is carbohydrate metabolism; tricarboxylic acid cycle; oxaloacetate from (S)-malate (quinone route): step 1/1. This Prochlorococcus marinus (strain MIT 9211) protein is Probable malate:quinone oxidoreductase.